A 443-amino-acid polypeptide reads, in one-letter code: Phosphoglucosamine mutase (443 aa).

Ser-102 acts as the Phosphoserine intermediate in catalysis. Residues Ser-102, Asp-241, Asp-243, and Asp-245 each contribute to the Mg(2+) site. Ser-102 carries the phosphoserine modification.

The protein belongs to the phosphohexose mutase family. Mg(2+) is required as a cofactor. Activated by phosphorylation.

The catalysed reaction is alpha-D-glucosamine 1-phosphate = D-glucosamine 6-phosphate. In terms of biological role, catalyzes the conversion of glucosamine-6-phosphate to glucosamine-1-phosphate. The sequence is that of Phosphoglucosamine mutase from Albidiferax ferrireducens (strain ATCC BAA-621 / DSM 15236 / T118) (Rhodoferax ferrireducens).